A 131-amino-acid polypeptide reads, in one-letter code: Hypocretin neuropeptide precursor (131 aa).

A signal peptide spans 1-33 (MNPPFAKVSWATVTLLLLLLLLPPAVLSPGAAA). Position 34 is a pyrrolidone carboxylic acid (Gln-34). 2 disulfides stabilise this stretch: Cys-39-Cys-45 and Cys-40-Cys-47. The residue at position 66 (Leu-66) is a Leucine amide. Met-97 is subject to Methionine amide. Residues 98–131 (GRRAGAEPAPRLCPGRRCLAAAASSVAPGGRSGI) constitute a propeptide, removed in mature form.

This sequence belongs to the orexin family. In terms of processing, specific enzymatic cleavages at paired basic residues yield the different active peptides.

The protein resides in the rough endoplasmic reticulum. It is found in the cytoplasmic vesicle. The protein localises to the synapse. In terms of biological role, neuropeptides that play a significant role in the regulation of food intake and sleep-wakefulness, possibly by coordinating the complex behavioral and physiologic responses of these complementary homeostatic functions. A broader role in the homeostatic regulation of energy metabolism, autonomic function, hormonal balance and the regulation of body fluids, is also suggested. Binds to orexin receptors HCRTR1/OX1R and HCRTR2/OX2R with a high affinity. Stimulates food intake. Modulates pituitary luteinizing hormone secretion in an ovarian steroid-dependent manner. Functionally, binds to orexin receptor HCRTR2/OX2R only. Stimulates food intake. Modulates pituitary luteinizing hormone secretion in an ovarian steroid-dependent manner. This is Hypocretin neuropeptide precursor (HCRT) from Sus scrofa (Pig).